The primary structure comprises 99 residues: uncharacterized protein (99 aa).

Belongs to the ycf15 family.

It is found in the plastid. It localises to the chloroplast. This is an uncharacterized protein from Saccharum hybrid (Sugarcane).